We begin with the raw amino-acid sequence, 328 residues long: Biotin synthase (328 aa).

The 230-residue stretch at 43 to 272 (NVVQKASLLS…KSTVRLSAGR (230 aa)) folds into the Radical SAM core domain. Positions 58, 62, and 65 each coordinate [4Fe-4S] cluster. Cys103, Cys135, Cys195, and Arg267 together coordinate [2Fe-2S] cluster.

This sequence belongs to the radical SAM superfamily. Biotin synthase family. As to quaternary structure, homodimer. The cofactor is [4Fe-4S] cluster. [2Fe-2S] cluster is required as a cofactor.

It catalyses the reaction (4R,5S)-dethiobiotin + (sulfur carrier)-SH + 2 reduced [2Fe-2S]-[ferredoxin] + 2 S-adenosyl-L-methionine = (sulfur carrier)-H + biotin + 2 5'-deoxyadenosine + 2 L-methionine + 2 oxidized [2Fe-2S]-[ferredoxin]. It participates in cofactor biosynthesis; biotin biosynthesis; biotin from 7,8-diaminononanoate: step 2/2. Catalyzes the conversion of dethiobiotin (DTB) to biotin by the insertion of a sulfur atom into dethiobiotin via a radical-based mechanism. This is Biotin synthase from Allorhizobium ampelinum (strain ATCC BAA-846 / DSM 112012 / S4) (Agrobacterium vitis (strain S4)).